Reading from the N-terminus, the 31-residue chain is Hemocyanin subunit 1 (31 aa).

The protein belongs to the tyrosinase family. Hemocyanin subfamily. As to expression, hemolymph.

The protein resides in the secreted. It is found in the extracellular space. Hemocyanins are copper-containing oxygen carriers occurring freely dissolved in the hemolymph of many mollusks and arthropods. The sequence is that of Hemocyanin subunit 1 from Homarus americanus (American lobster).